The primary structure comprises 384 residues: Glucose-fructose oxidoreductase domain-containing protein 2 (384 aa).

The signal sequence occupies residues 1–25 (MMTLPGIGVFGTGNTARVLIQLLRA). The segment at 358–384 (GEWESVELTNEETDSNQNLSEVIQHNL) is disordered. A compositionally biased stretch (polar residues) spans 372 to 384 (SNQNLSEVIQHNL).

This sequence belongs to the Gfo/Idh/MocA family.

It is found in the secreted. Its subcellular location is the extracellular space. It localises to the extracellular matrix. Functionally, promotes matrix assembly. This chain is Glucose-fructose oxidoreductase domain-containing protein 2 (gfod2), found in Xenopus laevis (African clawed frog).